A 105-amino-acid chain; its full sequence is Integration host factor (105 aa).

Positions 64 to 71 (LPKVGKVK) match the H2TH motif, binds DNA motif. The interval 82-94 (APTRRLRGLGDRQ) is lid, binds DNA.

This sequence belongs to the actinobacterial IHF (aIHF) family. As to quaternary structure, homodimer in solution. Binds DNA as a monomer.

It is found in the cytoplasm. In terms of biological role, a nucleoid-associated protein (NAP) required for septum formation and normal cell division as well as for DNA segregation. Binds about 135 sites across the chromosome, most of which are genes involved in virulence; most DNA-binding sites are immediately upstream of transcription start sites. When mIHF is depleted most of the genes are down-regulated. Binds supercoiled and linear dsDNA in a concentration-dependent manner, probably non-sequence specifically. Binding compacts DNA, protecting it from degradation. Initial binding to supercoiled DNA opens it fully, followed by bending and compaction. Bends and thus compacts linear DNA. Binds DNA via 2 sites, forms left-handed loops on linear DNA; at low concentrations unwinds larger cosmids (42.6 kb) then collapses and condenses DNA as protein levels rise. Forms mostly left-handed loops on condensing cosmid DNA. The polypeptide is Integration host factor (Mycobacterium tuberculosis (strain ATCC 25618 / H37Rv)).